Reading from the N-terminus, the 218-residue chain is MVTRMATKVSLEGKRVVLVPYMAEHVPKYHQWMQDSALLEATGSEPLSLEQEYEMQLSWTQDPNKRTFIVLDKDFVKGDLAHGQPHVEAMTGDVNIYMNDVDDPKVAEVEIMIAEPRSRGKGLGKESVLIMMAYGVKNLEIHKFTAKIGESNTASLSLFRKLGFEESSYSGIFKEVTLEYPVTNLRREELLKLLDEVIRHTHSSNNPSDSLLSGEATA.

The 148-residue stretch at 36 to 183 folds into the N-acetyltransferase domain; that stretch reads SALLEATGSE…KEVTLEYPVT (148 aa). Acetyl-CoA contacts are provided by residues 112-114, 120-125, 152-154, and phenylalanine 159; these read MIA, GKGLGK, and NTA.

It belongs to the acetyltransferase family. GNAT subfamily. Oligomer. In terms of tissue distribution, expressed throughout the plant.

The protein resides in the cytoplasm. It localises to the nucleus. It carries out the reaction an N-terminal L-alpha-aminoacyl-[protein] + acetyl-CoA = N-terminal N(alpha)-acetyl-L-alpha-aminoacyl-[protein] + CoA + H(+). It catalyses the reaction L-lysyl-[protein] + acetyl-CoA = N(6)-acetyl-L-lysyl-[protein] + CoA + H(+). Functionally, probable protein acetyltransferase with dual specificity triggering both N-alpha-acetylation (NTA) and epsilon-lysine acetylation (KA). This is GCN5-related N-acetyltransferase 9 from Arabidopsis thaliana (Mouse-ear cress).